The chain runs to 42 residues: Photosystem I reaction center subunit IX (42 aa).

A helical transmembrane segment spans residues 7-27 (YLSTAPVIATIWFGFLAGLLI).

The protein belongs to the PsaJ family.

The protein resides in the plastid. Its subcellular location is the chloroplast thylakoid membrane. May help in the organization of the PsaE and PsaF subunits. The protein is Photosystem I reaction center subunit IX of Chaetosphaeridium globosum (Charophycean green alga).